The following is a 354-amino-acid chain: Guanine nucleotide-binding protein G(i) subunit alpha (354 aa).

A lipid anchor (N-myristoyl glycine) is attached at glycine 2. Residue cysteine 3 is the site of S-palmitoyl cysteine attachment. The G-alpha domain occupies 32–354; that stretch reads REVKLLLLGA…KNNLKDCGLF (323 aa). The G1 motif stretch occupies residues 35–48; sequence KLLLLGAGESGKST. Residues 40–47, 175–181, 200–204, 269–272, and alanine 326 contribute to the GTP site; these read GAGESGKS, LRTRVKT, DVGGQ, and NKKD. Residues serine 47 and threonine 181 each coordinate Mg(2+). A G2 motif region spans residues 173–181; it reads DVLRTRVKT. Residues 196–205 are G3 motif; that stretch reads FKMFDVGGQR. Positions 265–272 are G4 motif; that stretch reads ILFLNKKD. The interval 324 to 329 is G5 motif; sequence TCATDT.

The protein belongs to the G-alpha family. G(i/o/t/z) subfamily. In terms of assembly, g proteins are composed of 3 units; alpha, beta and gamma. The alpha chain contains the guanine nucleotide binding site.

Its function is as follows. Guanine nucleotide-binding proteins (G proteins) are involved as modulators or transducers in various transmembrane signaling systems. The sequence is that of Guanine nucleotide-binding protein G(i) subunit alpha from Planorbella trivolvis (Marsh rams-horn).